The chain runs to 389 residues: Probable protein phosphatase 2C 47 (389 aa).

The PPM-type phosphatase domain occupies 76–346 (RSGSFADIGP…DNLTVIVVCF (271 aa)). Mn(2+) is bound by residues Asp120, Gly121, Asp294, and Asp337.

The protein belongs to the PP2C family. Requires Mg(2+) as cofactor. It depends on Mn(2+) as a cofactor.

It catalyses the reaction O-phospho-L-seryl-[protein] + H2O = L-seryl-[protein] + phosphate. The enzyme catalyses O-phospho-L-threonyl-[protein] + H2O = L-threonyl-[protein] + phosphate. In Oryza sativa subsp. japonica (Rice), this protein is Probable protein phosphatase 2C 47.